The chain runs to 698 residues: Nitric oxide-associated protein 1 (698 aa).

The segment at Phe-42–Gly-66 is disordered. Tyr-77 carries the post-translational modification Phosphotyrosine. Disordered stretches follow at residues Asp-80–Leu-134 and Leu-279–Ser-306. The segment covering Glu-102–Val-126 has biased composition (basic and acidic residues). Residues Leu-202–Glu-503 enclose the CP-type G domain.

The protein belongs to the TRAFAC class YlqF/YawG GTPase family. NOA1 subfamily. Homodimer or multimer. Interacts with mitochondrial complex I, DAP3, MRPL12 and MRPS27.

The protein resides in the mitochondrion inner membrane. Involved in regulation of mitochondrial protein translation and respiration. Plays a role in mitochondria-mediated cell death. May act as a scaffolding protein or stabilizer of respiratory chain supercomplexes. Binds GTP. The sequence is that of Nitric oxide-associated protein 1 (NOA1) from Homo sapiens (Human).